A 199-amino-acid polypeptide reads, in one-letter code: Probable DNA-directed RNA polymerase subunit delta (199 aa).

An HTH HARE-type domain is found at 14–81 (LSLIEVAHAI…GDNMWGLRAW (68 aa)). Composition is skewed to acidic residues over residues 116–147 (GDDDDVIDYDDDDPEDDDNYDDDDDQDDDTDD), 157–171 (AGVDDTDDDVADETL), and 182–199 (LNDDDDDDDYDDEDDESK). The disordered stretch occupies residues 116–199 (GDDDDVIDYD…DYDDEDDESK (84 aa)).

It belongs to the RpoE family. RNAP is composed of a core of 2 alpha, a beta and a beta' subunits. The core is associated with a delta subunit and one of several sigma factors.

Its function is as follows. Participates in both the initiation and recycling phases of transcription. In the presence of the delta subunit, RNAP displays an increased specificity of transcription, a decreased affinity for nucleic acids, and an increased efficiency of RNA synthesis because of enhanced recycling. This is Probable DNA-directed RNA polymerase subunit delta from Lactiplantibacillus plantarum (strain ATCC BAA-793 / NCIMB 8826 / WCFS1) (Lactobacillus plantarum).